The primary structure comprises 257 residues: Phosphonates import ATP-binding protein PhnC (257 aa).

One can recognise an ABC transporter domain in the interval I2–A246. G35 to S42 serves as a coordination point for ATP.

It belongs to the ABC transporter superfamily. Phosphonates importer (TC 3.A.1.9.1) family. As to quaternary structure, the complex is composed of two ATP-binding proteins (PhnC), two transmembrane proteins (PhnE) and a solute-binding protein (PhnD).

The protein localises to the cell membrane. It catalyses the reaction phosphonate(out) + ATP + H2O = phosphonate(in) + ADP + phosphate + H(+). In terms of biological role, part of the ABC transporter complex PhnCDE involved in phosphonates import. Responsible for energy coupling to the transport system. The protein is Phosphonates import ATP-binding protein PhnC of Bacillus cereus (strain ATCC 14579 / DSM 31 / CCUG 7414 / JCM 2152 / NBRC 15305 / NCIMB 9373 / NCTC 2599 / NRRL B-3711).